A 648-amino-acid polypeptide reads, in one-letter code: L-aspartate oxidase 2-b, chloroplastic (648 aa).

FAD-binding positions include 98–101, lysine 120, 127–134, and aspartate 298; these read SGIA and STNYAQGG. The Proton donor/acceptor role is filled by arginine 373. FAD-binding positions include glutamate 458 and 474–475; that span reads SL.

The protein belongs to the FAD-dependent oxidoreductase 2 family. NadB subfamily. Requires FAD as cofactor.

Its subcellular location is the plastid. The protein localises to the chloroplast. It carries out the reaction L-aspartate + O2 = iminosuccinate + H2O2. The protein operates within alkaloid biosynthesis; nicotine biosynthesis. It functions in the pathway cofactor biosynthesis; NAD(+) biosynthesis; iminoaspartate from L-aspartate (oxidase route): step 1/1. Functionally, involved in the biosynthesis of pyridine alkaloid natural products, leading mainly to the production of anabasine, anatabine, nicotine and nornicotine, effective deterrents against herbivores with antiparasitic and pesticide properties (neurotoxins); nornicotine serves as the precursor in the synthesis of the carcinogen compound N'-nitrosonornicotine (NNN). Catalyzes the oxidation of L-aspartate to iminoaspartate. This Nicotiana tabacum (Common tobacco) protein is L-aspartate oxidase 2-b, chloroplastic.